Here is a 41-residue protein sequence, read N- to C-terminus: Photosystem I reaction center subunit IX (41 aa).

The chain crosses the membrane as a helical span at residues 7–27 (YLSVAPVLSTLWFGALAGLLI).

The protein belongs to the PsaJ family.

It is found in the plastid. It localises to the chloroplast thylakoid membrane. In terms of biological role, may help in the organization of the PsaE and PsaF subunits. This chain is Photosystem I reaction center subunit IX, found in Jasminum nudiflorum (Winter jasmine).